The primary structure comprises 241 residues: 3-deoxy-manno-octulosonate cytidylyltransferase (241 aa).

This sequence belongs to the KdsB family.

It localises to the cytoplasm. The enzyme catalyses 3-deoxy-alpha-D-manno-oct-2-ulosonate + CTP = CMP-3-deoxy-beta-D-manno-octulosonate + diphosphate. It functions in the pathway nucleotide-sugar biosynthesis; CMP-3-deoxy-D-manno-octulosonate biosynthesis; CMP-3-deoxy-D-manno-octulosonate from 3-deoxy-D-manno-octulosonate and CTP: step 1/1. It participates in bacterial outer membrane biogenesis; lipopolysaccharide biosynthesis. Activates KDO (a required 8-carbon sugar) for incorporation into bacterial lipopolysaccharide in Gram-negative bacteria. The sequence is that of 3-deoxy-manno-octulosonate cytidylyltransferase from Rickettsia typhi (strain ATCC VR-144 / Wilmington).